The following is a 214-amino-acid chain: Probable chemoreceptor glutamine deamidase CheD (214 aa).

The protein belongs to the CheD family.

The catalysed reaction is L-glutaminyl-[protein] + H2O = L-glutamyl-[protein] + NH4(+). Its function is as follows. Probably deamidates glutamine residues to glutamate on methyl-accepting chemotaxis receptors (MCPs), playing an important role in chemotaxis. The polypeptide is Probable chemoreceptor glutamine deamidase CheD (Vibrio vulnificus (strain YJ016)).